Here is a 309-residue protein sequence, read N- to C-terminus: Voltage-dependent anion channel-forming protein mll4386 (309 aa).

3 helical membrane-spanning segments follow: residues 32–52, 58–78, and 227–247; these read ILPQ…LARW, GVFN…YLSF, and IVCL…TPLF.

Belongs to the anion channel-forming bestrophin (TC 1.A.46) family.

It localises to the cell membrane. The sequence is that of Voltage-dependent anion channel-forming protein mll4386 from Mesorhizobium japonicum (strain LMG 29417 / CECT 9101 / MAFF 303099) (Mesorhizobium loti (strain MAFF 303099)).